The primary structure comprises 512 residues: ADP,ATP carrier protein 4 (512 aa).

Transmembrane regions (helical) follow at residues 34 to 54 (ISKF…QNLI), 71 to 91 (ISFL…VMYV), 102 to 122 (IFYL…YVIF), 157 to 177 (FSLF…LLFW), 192 to 212 (FYPL…HFLE), 231 to 251 (FHTL…IVSI), 296 to 316 (LIAT…GPWK), 330 to 350 (AAFI…FVLL), 361 to 381 (FTSA…FFAF), 390 to 410 (LIIA…IGAI), 448 to 468 (VIGT…IFII), and 476 to 496 (SISI…IWAT).

Belongs to the ADP/ATP translocase tlc family.

It localises to the cell membrane. Its function is as follows. Provides the rickettsial cell with host ATP in exchange for rickettsial ADP. This is an obligate exchange system. This energy acquiring activity is an important component of rickettsial parasitism. This is ADP,ATP carrier protein 4 (tlcD) from Rickettsia typhi (strain ATCC VR-144 / Wilmington).